The primary structure comprises 890 residues: Translation initiation factor IF-2 (890 aa).

A disordered region spans residues 45–304 (LIDHLNQKNS…LQQGFQKPAQ (260 aa)). The segment covering 67–81 (STLNIPGTGGKSKSV) has biased composition (polar residues). Basic and acidic residues predominate over residues 92–217 (VKRDPQEAER…RMAEENKWTD (126 aa)). Residues 252–266 (GRGRNAKAARPKKGN) show a composition bias toward basic residues. Residues 267–280 (KHAESKADREEARA) show a composition bias toward basic and acidic residues. In terms of domain architecture, tr-type G spans 389-558 (PRAPVVTIMG…LLQAEVLELK (170 aa)). The tract at residues 398 to 405 (GHVDHGKT) is G1. 398-405 (GHVDHGKT) serves as a coordination point for GTP. Positions 423 to 427 (GITQH) are G2. The segment at 444-447 (DTPG) is G3. Residues 444–448 (DTPGH) and 498–501 (NKID) contribute to the GTP site. Residues 498–501 (NKID) are G4. Residues 534 to 536 (SAK) are G5. Position 808 is an N6-acetyllysine (lysine 808).

This sequence belongs to the TRAFAC class translation factor GTPase superfamily. Classic translation factor GTPase family. IF-2 subfamily.

Its subcellular location is the cytoplasm. Functionally, one of the essential components for the initiation of protein synthesis. Protects formylmethionyl-tRNA from spontaneous hydrolysis and promotes its binding to the 30S ribosomal subunits. Also involved in the hydrolysis of GTP during the formation of the 70S ribosomal complex. The sequence is that of Translation initiation factor IF-2 from Escherichia coli (strain 55989 / EAEC).